The primary structure comprises 216 residues: GTP cyclohydrolase 1 (216 aa).

The Zn(2+) site is built by cysteine 108, histidine 111, and cysteine 179.

The protein belongs to the GTP cyclohydrolase I family. In terms of assembly, toroid-shaped homodecamer, composed of two pentamers of five dimers.

It carries out the reaction GTP + H2O = 7,8-dihydroneopterin 3'-triphosphate + formate + H(+). It functions in the pathway cofactor biosynthesis; 7,8-dihydroneopterin triphosphate biosynthesis; 7,8-dihydroneopterin triphosphate from GTP: step 1/1. This is GTP cyclohydrolase 1 from Shewanella sp. (strain ANA-3).